Here is a 127-residue protein sequence, read N- to C-terminus: Ribosome-binding factor A (127 aa).

This sequence belongs to the RbfA family. Monomer. Binds 30S ribosomal subunits, but not 50S ribosomal subunits or 70S ribosomes.

It is found in the cytoplasm. Functionally, one of several proteins that assist in the late maturation steps of the functional core of the 30S ribosomal subunit. Associates with free 30S ribosomal subunits (but not with 30S subunits that are part of 70S ribosomes or polysomes). Required for efficient processing of 16S rRNA. May interact with the 5'-terminal helix region of 16S rRNA. This is Ribosome-binding factor A from Glaesserella parasuis serovar 5 (strain SH0165) (Haemophilus parasuis).